Here is an 84-residue protein sequence, read N- to C-terminus: Large ribosomal subunit protein bL27 (84 aa).

The disordered stretch occupies residues 1 to 21 (MAHKKGASSTRNGRDSNAQRL). Residues 7-19 (ASSTRNGRDSNAQ) show a composition bias toward polar residues.

Belongs to the bacterial ribosomal protein bL27 family.

In Clavibacter michiganensis subsp. michiganensis (strain NCPPB 382), this protein is Large ribosomal subunit protein bL27.